A 46-amino-acid polypeptide reads, in one-letter code: uncharacterized protein (46 aa).

The chain crosses the membrane as a helical span at residues 12-34 (HFNHFVIALSFIYGLTELGYLLL).

It localises to the cell membrane. This is an uncharacterized protein from Bacillus subtilis (strain 168).